Reading from the N-terminus, the 589-residue chain is Aspartate--tRNA ligase (589 aa).

L-aspartate is bound at residue Glu-174. Residues 198-201 (QLFK) form an aspartate region. Residue Arg-220 participates in L-aspartate binding. Residues 220-222 (RDE) and Gln-229 each bind ATP. His-448 serves as a coordination point for L-aspartate. Residue Glu-484 participates in ATP binding. Arg-491 contributes to the L-aspartate binding site. Residue 536–539 (GLDR) coordinates ATP.

It belongs to the class-II aminoacyl-tRNA synthetase family. Type 1 subfamily. In terms of assembly, homodimer.

It localises to the cytoplasm. It carries out the reaction tRNA(Asp) + L-aspartate + ATP = L-aspartyl-tRNA(Asp) + AMP + diphosphate. In terms of biological role, catalyzes the attachment of L-aspartate to tRNA(Asp) in a two-step reaction: L-aspartate is first activated by ATP to form Asp-AMP and then transferred to the acceptor end of tRNA(Asp). The chain is Aspartate--tRNA ligase from Leuconostoc citreum (strain KM20).